The following is a 935-amino-acid chain: Protocadherin gamma-A11 (935 aa).

The signal sequence occupies residues 1–29; sequence MANRLQRGDRSRLLLLLCIFLGTLRGFRA. Cadherin domains are found at residues 30–134, 135–243, 244–348, 349–453, 454–563, and 571–677; these read RQIR…APSF, QEDE…IPMF, TQSV…APEI, TITS…PPVF, PHSS…APEI, and DGST…ADLG. Residues 30-693 are Extracellular-facing; it reads RQIRYSVPEE…NSETSDLSLY (664 aa). The N-linked (GlcNAc...) asparagine glycan is linked to Asn48. Residues Asn255, Asn266, Asn420, and Asn546 are each glycosylated (N-linked (GlcNAc...) asparagine). A helical membrane pass occupies residues 694 to 714; it reads LVVAVAAVSCIFLVFVIVLLA. Residues 715 to 935 lie on the Cytoplasmic side of the membrane; it reads LRLWRWHKSR…KKKSGKKEKK (221 aa). Disordered stretches follow at residues 805-844 and 905-935; these read CDPT…WPNN and ATLT…KEKK. The span at 807–844 shows a compositional bias: polar residues; sequence PTSNQQAPPNTDWRFSQAQRPGTSGSQNGDDTGTWPNN. The segment covering 925-935 has biased composition (basic residues); the sequence is NKKKSGKKEKK.

The protein resides in the cell membrane. Its function is as follows. Potential calcium-dependent cell-adhesion protein. May be involved in the establishment and maintenance of specific neuronal connections in the brain. The sequence is that of Protocadherin gamma-A11 (PCDHGA11) from Homo sapiens (Human).